Reading from the N-terminus, the 235-residue chain is Orotidine 5'-phosphate decarboxylase (235 aa).

Substrate-binding positions include Asp10, Lys33, 60–69, Thr123, Arg185, Gln194, Gly214, and Arg215; that span reads DLKMNDIPNT. The active-site Proton donor is the Lys62.

The protein belongs to the OMP decarboxylase family. Type 1 subfamily. In terms of assembly, homodimer.

It catalyses the reaction orotidine 5'-phosphate + H(+) = UMP + CO2. The protein operates within pyrimidine metabolism; UMP biosynthesis via de novo pathway; UMP from orotate: step 2/2. Functionally, catalyzes the decarboxylation of orotidine 5'-monophosphate (OMP) to uridine 5'-monophosphate (UMP). The chain is Orotidine 5'-phosphate decarboxylase from Lactobacillus johnsonii (strain CNCM I-12250 / La1 / NCC 533).